Here is a 402-residue protein sequence, read N- to C-terminus: Beta-peptidyl aminopeptidase BapA (402 aa).

The N-terminal stretch at 1–29 (MTSTQRLWSGALPLLTALIVSIAATASLA) is a signal peptide. Serine 279 serves as the catalytic Nucleophile. Catalysis depends on proton donor/acceptor residues serine 317 and glutamate 319.

It belongs to the peptidase S58 family. As to quaternary structure, heterooctamer of 4 heterodimers ((alpha:beta)4); each heterodimer is composed of an alpha subunit and a beta subunit processed from the same precursor. Post-translationally, autoproteolytic processing to generate the alpha and beta subunit is required for self-activation and is proposed to use a similar mechanism as substrate cleavage.

It localises to the periplasm. The catalysed reaction is Cleaves N-terminal beta-homoamino acids from peptides composed of 2 to 6 amino acids.. Its activity is regulated as follows. Inhibited by AEBSF (4-(2-aminoethyl)benzenesulfonyl fluoride, Pefabloc SC), ampicillin and AMP(hyd) (ampillicin-derived penicilloic acid). In terms of biological role, beta-aminopeptidase that can cleave synthetic beta-peptides which consist of backbone-elongated beta-amino acid residues that are not processed by common proteolytic enzymes. Can cleave the beta-peptides beta-homoVal-beta-homoAla-beta-homoLeu and beta-homoAla-beta-homoLeu. Requires a beta-amino acid at the N-terminus of peptide substrates and cleaves the peptide bond between the N-terminal beta-amino acid and the amino acid at the second position of tripeptidic substrates of the general structure H-betahXaa-Ile-betahTyr-OH according to the following preferences with regard to the side chain of the N-terminal beta-amino acid: aliphatic and aromatic &gt; OH-containing &gt; hydrogen, basic and polar. The chain is Beta-peptidyl aminopeptidase BapA from Sphingosinicella xenopeptidilytica.